We begin with the raw amino-acid sequence, 394 residues long: 1-deoxy-D-xylulose 5-phosphate reductoisomerase (394 aa).

6 residues coordinate NADPH: Thr14, Gly15, Ser16, Ile17, Gly40, and Asn128. Lys129 contributes to the 1-deoxy-D-xylulose 5-phosphate binding site. Glu130 is a binding site for NADPH. Asp154 is a Mn(2+) binding site. 1-deoxy-D-xylulose 5-phosphate contacts are provided by Ser155, Glu156, Ser180, and His203. Glu156 contacts Mn(2+). Gly209 is a binding site for NADPH. Residues Ser216, Asn221, Lys222, and Glu225 each coordinate 1-deoxy-D-xylulose 5-phosphate. Glu225 provides a ligand contact to Mn(2+).

It belongs to the DXR family. Requires Mg(2+) as cofactor. It depends on Mn(2+) as a cofactor.

It catalyses the reaction 2-C-methyl-D-erythritol 4-phosphate + NADP(+) = 1-deoxy-D-xylulose 5-phosphate + NADPH + H(+). The protein operates within isoprenoid biosynthesis; isopentenyl diphosphate biosynthesis via DXP pathway; isopentenyl diphosphate from 1-deoxy-D-xylulose 5-phosphate: step 1/6. Catalyzes the NADPH-dependent rearrangement and reduction of 1-deoxy-D-xylulose-5-phosphate (DXP) to 2-C-methyl-D-erythritol 4-phosphate (MEP). The sequence is that of 1-deoxy-D-xylulose 5-phosphate reductoisomerase from Xylella fastidiosa (strain M23).